Here is a 166-residue protein sequence, read N- to C-terminus: Putative 4-hydroxy-4-methyl-2-oxoglutarate aldolase (166 aa).

Substrate is bound by residues 74 to 77 (GDQI) and R96. D97 provides a ligand contact to a divalent metal cation.

The protein belongs to the class II aldolase/RraA-like family. As to quaternary structure, homotrimer. The cofactor is a divalent metal cation.

It carries out the reaction 4-hydroxy-4-methyl-2-oxoglutarate = 2 pyruvate. The enzyme catalyses oxaloacetate + H(+) = pyruvate + CO2. Catalyzes the aldol cleavage of 4-hydroxy-4-methyl-2-oxoglutarate (HMG) into 2 molecules of pyruvate. Also contains a secondary oxaloacetate (OAA) decarboxylase activity due to the common pyruvate enolate transition state formed following C-C bond cleavage in the retro-aldol and decarboxylation reactions. The protein is Putative 4-hydroxy-4-methyl-2-oxoglutarate aldolase of Xanthomonas oryzae pv. oryzae (strain MAFF 311018).